Consider the following 713-residue polypeptide: KNR4/SMI1 homolog (713 aa).

Disordered stretches follow at residues 18-129, 255-274, 400-457, and 500-713; these read PDRY…VTRD, IFIN…SPVA, RHQM…SKPA, and EPLE…KGKK. Residues 22–34 are compositionally biased toward low complexity; the sequence is ASQQRSSKASQSA. Residues 35-65 show a composition bias toward polar residues; it reads GANSQNRPLYNNDDNQSEMYQASSSYTGGYT. 2 stretches are compositionally biased toward low complexity: residues 66-81 and 88-103; these read NSPS…GAAA and SSRN…SSTS. A compositionally biased stretch (polar residues) spans 260 to 270; sequence NAGSPNSSTPG. Basic and acidic residues predominate over residues 400–412; that stretch reads RHQMQRREHERRQ. The segment covering 413 to 429 has biased composition (low complexity); the sequence is AAAAAQQQQQQQQHHAQ. Composition is skewed to basic and acidic residues over residues 507–605 and 613–662; these read EIKG…EEQK and AKAE…KIDE. The segment covering 663 to 686 has biased composition (acidic residues); it reads ENGNAEEADEEADDDDEDDEEEGD. Over residues 701–713 the composition is skewed to basic residues; that stretch reads SKSKKKNKKKGKK.

The protein belongs to the KNR4/SMI1 family.

This Yarrowia lipolytica (strain CLIB 122 / E 150) (Yeast) protein is KNR4/SMI1 homolog.